The sequence spans 343 residues: MGGPRGAGWVAAGLLLGAGACYCIYRLTRGRRRGDRELGIRSSKSAGALEEGTSEGQLCGRSARPQTGGTWESQWSKTSQPEDLTDGSYDDVLNAEQLQKLLYLLESTEDPVIIERALITLGNNAAFSVNQAIIRELGGIPIVANKINHSNQSIKEKALNALNNLSVNVENQIKIKIYISQVCEDVFSGPLNSAVQLAGLTLLTNMTVTNDHQHMLHSYITDLFQVLLTGNGNTKVQVLKLLLNLSENPAMTEGLLRAQVDSSFLSLYDSHVAKEILLRVLTLFQNIKNCLKIEGHLAVQPTFTEGSLFFLLHGEECAQKIRALVDHHDAEVKEKVVTIIPKI.

Residues 5 to 27 (RGAGWVAAGLLLGAGACYCIYRL) traverse the membrane as a helical segment. The interval 43–83 (SKSAGALEEGTSEGQLCGRSARPQTGGTWESQWSKTSQPED) is disordered. Serine 45 carries the post-translational modification Phosphoserine. Glutamate 50 bears the Phosphothreonine mark. Residues 64-82 (RPQTGGTWESQWSKTSQPE) are compositionally biased toward polar residues. The residue at position 85 (threonine 85) is a Phosphothreonine. One copy of the ARM repeat lies at 138-180 (GGIPIVANKINHSNQSIKEKALNALNNLSVNVENQIKIKIYIS).

In terms of assembly, interacts with the DNA-binding domain of p53/TP53. In terms of tissue distribution, expressed in all tissues tested with higher expression in placenta, liver, kidney, heart and brain.

It is found in the endoplasmic reticulum membrane. The protein localises to the mitochondrion outer membrane. May play a role in cell survival and cell growth. May suppress the transcriptional activity of p53/TP53. The protein is Armadillo repeat-containing protein 10 (ARMC10) of Homo sapiens (Human).